Here is a 524-residue protein sequence, read N- to C-terminus: Coatomer subunit delta-1 (524 aa).

The segment at 215–244 is disordered; sequence MDMDSFASKPKGGRPSAAATAPGKGLGMKL. Residues 283 to 524 enclose the MHD domain; sequence SDPVTVTIEE…RLVAANYQVV (242 aa).

The protein belongs to the adaptor complexes medium subunit family. Delta-COP subfamily. As to quaternary structure, oligomeric complex that consists of at least the alpha, beta, beta', gamma, delta, epsilon and zeta subunits.

The protein resides in the cytoplasm. The protein localises to the golgi apparatus membrane. It localises to the cytoplasmic vesicle. Its subcellular location is the COPI-coated vesicle membrane. Its function is as follows. The coatomer is a cytosolic protein complex that binds to dilysine motifs and reversibly associates with Golgi non-clathrin-coated vesicles, which further mediate biosynthetic protein transport from the ER, via the Golgi up to the trans Golgi network. Coatomer complex is required for budding from Golgi membranes, and is essential for the retrograde Golgi-to-ER transport of dilysine-tagged proteins. This chain is Coatomer subunit delta-1, found in Oryza sativa subsp. japonica (Rice).